The chain runs to 364 residues: MKKLAISIGDINSIGLEILVRSHEELSKICTPFYFIHESLLNKALKLLNLKLFNAKIVAFKDDKDYEFNFIKKENSLEIYSFCLPLGFKVDENFEIQAGEIDAKSGLYGFLSFKAASYFVYEKHAHALLTLPIHKKAWEDAGLKYKGHTDALRDFFKKNAIMMLGCKELFVGLFSEHIPLAKVSKKITFKNLSIFLKDFYKETHFKKMGLLGFNPHAGDYGVIGGEEEKIMEKAIAFVNAFLHSKKDEKFFKKALKDENLQKELLLNFKGKGVYLPYPLVADTAFTKAGLKNCNRLVAMYHDLALAPLKALYFDKSINVSLNLPIIRVSVDHGTAFDKAYKNAKINTKSYFEAAKFAINLNSKA.

Residues His-148 and Thr-149 each coordinate substrate. Residues His-177, His-216, and His-301 each contribute to the a divalent metal cation site. Substrate contacts are provided by Lys-309, Asn-318, and Arg-327.

Belongs to the PdxA family. In terms of assembly, homodimer. Zn(2+) is required as a cofactor. The cofactor is Mg(2+). Co(2+) serves as cofactor.

The protein resides in the cytoplasm. The enzyme catalyses 4-(phosphooxy)-L-threonine + NAD(+) = 3-amino-2-oxopropyl phosphate + CO2 + NADH. It participates in cofactor biosynthesis; pyridoxine 5'-phosphate biosynthesis; pyridoxine 5'-phosphate from D-erythrose 4-phosphate: step 4/5. Catalyzes the NAD(P)-dependent oxidation of 4-(phosphooxy)-L-threonine (HTP) into 2-amino-3-oxo-4-(phosphooxy)butyric acid which spontaneously decarboxylates to form 3-amino-2-oxopropyl phosphate (AHAP). In Campylobacter jejuni subsp. jejuni serotype O:23/36 (strain 81-176), this protein is 4-hydroxythreonine-4-phosphate dehydrogenase.